Reading from the N-terminus, the 832-residue chain is Pre-mRNA-splicing factor SYF1 (832 aa).

HAT repeat units follow at residues 18–50 (HLVTDDDFVYEQDIQRSPGSTKPWLAYISYKIQ), 52–84 (GTVEEQAFVLERACMQLPRSYKLWKMYLTFRTK), 96–128 (AEYRKVNSLFERALILLNKMPRIWEMYLKFLMK), 130–164 (PLVTLTRRTFDRALRALPITQHNRIWALYRPFANS), 196–235 (GYYTEAAKKYIDVLNNPRFTSKHGKGHFELWSEMVELLVE), 245–278 (ETGIDVERIIRSGIERFADQRGKLWVGLATYWIR), 280–315 (GSFERARDVFEEGITTVMTVRDFTLVFDSYAEFEES), 383–421 (DNHNEVVNTYTNAIAAVQPKKASGPFHQLWANYAKFYER), 423–459 (GDLRSARIIMEKAVKVPFKSVVELADMWIEWAEMELR), 476–508 (APKRSTVDYFDETLTPQQRVHKSWKLWSFYVDL), 513–545 (GTLEDTKKVYERIFELRIATPQTVVNYANLLEE), 547–581 (KYYEESFKIYERGLDLFSYPVAFELWNMYLTKAVD), 584–618 (ISIERLRDLFEQAVEGCPPKFAKIIYLMYGNLEEE), 656–690 (FGLPSTRQIYERAIAALPDDEARDMCLKFADMEKR), and 692–726 (GEIDRARAIYGHASQFCDPRTTPAFWTKWEQFEVQ).

It belongs to the crooked-neck family. Associated with the spliceosome.

It is found in the nucleus. Functionally, involved in pre-mRNA splicing and cell cycle progression. The polypeptide is Pre-mRNA-splicing factor SYF1 (SYF1) (Pyricularia oryzae (strain 70-15 / ATCC MYA-4617 / FGSC 8958) (Rice blast fungus)).